The primary structure comprises 431 residues: Chaperone SurA (431 aa).

Residues 1–22 (MKLWKPTLISVLSALTLFNAHA) form the signal peptide. 2 PpiC domains span residues 173–271 (TVQY…KIDD) and 280–380 (VTEV…EVLD).

Its subcellular location is the periplasm. The catalysed reaction is [protein]-peptidylproline (omega=180) = [protein]-peptidylproline (omega=0). Its function is as follows. Chaperone involved in the correct folding and assembly of outer membrane proteins. Recognizes specific patterns of aromatic residues and the orientation of their side chains, which are found more frequently in integral outer membrane proteins. May act in both early periplasmic and late outer membrane-associated steps of protein maturation. This Vibrio cholerae serotype O1 (strain ATCC 39315 / El Tor Inaba N16961) protein is Chaperone SurA.